Here is a 203-residue protein sequence, read N- to C-terminus: Meiotically up-regulated protein PB17E12.09 (203 aa).

Residues Cys92 to Ile177 adopt a coiled-coil conformation.

Its subcellular location is the cytoplasm. Functionally, has a role in meiosis and sporulation. In Schizosaccharomyces pombe (strain 972 / ATCC 24843) (Fission yeast), this protein is Meiotically up-regulated protein PB17E12.09.